Consider the following 68-residue polypeptide: Protein SlyX homolog (68 aa).

The protein belongs to the SlyX family.

The chain is Protein SlyX homolog from Pseudomonas fluorescens (strain Pf0-1).